Reading from the N-terminus, the 1432-residue chain is Gag-Pol polyprotein (1432 aa).

Residue Gly2 is the site of N-myristoyl glycine; by host attachment. The tract at residues 7-31 (ILSGGKLDDWEKIRLRPGGKKQYRI) is interaction with Gp41. Residues 8–43 (LSGGKLDDWEKIRLRPGGKKQYRIKHLVWASRELDR) form an interaction with host CALM1 region. An interaction with host AP3D1 region spans residues 12–19 (KLDDWEKI). Positions 14-33 (DDWEKIRLRPGGKKQYRIKH) are interaction with membrane phosphatidylinositol 4,5-bisphosphate and RNA. Positions 16 to 22 (WEKIRLR) match the Nuclear export signal motif. Residues 26–32 (KKQYRIK) carry the Nuclear localization signal motif. Residues 73–77 (EEIKS) are interaction with membrane phosphatidylinositol 4,5-bisphosphate. Tyr132 is subject to Phosphotyrosine; by host. Positions 189 to 227 (NTIGGHQAAMQMLKDTINEEAAEWDRVHPVHAGPVAPGQ) are interaction with human PPIA/CYPA and NUP153. The interval 277 to 363 (YSPVSILDIR…GGPGHKARVL (87 aa)) is dimerization/Multimerization of capsid protein p24. 2 CCHC-type zinc fingers span residues 389-406 (VKCF…NCRA) and 410-427 (KGCW…DCTE). Residues 443–482 (EAREFSPEQTRANSPTSREPRVRRGDPLPETGAEGQGTVS) are disordered. Residues 449-459 (PEQTRANSPTS) are compositionally biased toward polar residues. Positions 460–469 (REPRVRRGDP) are enriched in basic and acidic residues. The interval 486-490 (PQITL) is dimerization of protease. The Peptidase A2 domain maps to 505-574 (REALLDTGAD…TPVNIIGRNM (70 aa)). The active-site For protease activity; shared with dimeric partner is the Asp510. 2 dimerization of protease regions span residues 534 to 540 (GIGGFIK) and 573 to 585 (NMLT…LNFP). In terms of domain architecture, Reverse transcriptase spans 628 to 818 (EGKISRIGPE…PPFLWMGYEL (191 aa)). Residues Asp694, Asp769, and Asp770 each contribute to the Mg(2+) site. Residues 811-819 (FLWMGYELH) form an RT 'primer grip' region. Positions 982–998 (WETWWTDYWQATWIPEW) match the Tryptophan repeat motif motif. Residues 1018–1141 (IMGAETFYVD…VDKLVSSGIR (124 aa)) form the RNase H type-1 domain. Mg(2+)-binding residues include Asp1027, Glu1062, Asp1082, and Asp1133. Residues 1147–1188 (DGIDKAQEEHEKYHSNWRAMASDFNLPPVVAKEIVASCDKCQ) form an Integrase-type zinc finger. Zn(2+) is bound by residues His1156, His1160, Cys1184, and Cys1187. One can recognise an Integrase catalytic domain in the interval 1198 to 1348 (VDCSPGIWQL…SAGERIIDII (151 aa)). Mg(2+) contacts are provided by Asp1208, Asp1260, and Glu1296. The segment at residues 1367 to 1414 (FRVYYRDSRDPIWKGPAKLLWKGEGAVVIQDNSEIKVVPRRKAKIIRD) is a DNA-binding region (integrase-type).

In terms of assembly, homotrimer; further assembles as hexamers of trimers. Interacts with gp41 (via C-terminus). Interacts with host CALM1; this interaction induces a conformational change in the Matrix protein, triggering exposure of the myristate group. Interacts with host AP3D1; this interaction allows the polyprotein trafficking to multivesicular bodies during virus assembly. Part of the pre-integration complex (PIC) which is composed of viral genome, matrix protein, Vpr and integrase. Homodimer; the homodimer further multimerizes as homohexamers or homopentamers. Interacts with human PPIA/CYPA; This interaction stabilizes the capsid. Interacts with human NUP153. Interacts with host PDZD8; this interaction stabilizes the capsid. Interacts with monkey TRIM5; this interaction destabilizes the capsid. As to quaternary structure, homodimer, whose active site consists of two apposed aspartic acid residues. In terms of assembly, heterodimer of p66 RT and p51 RT (RT p66/p51). Heterodimerization of RT is essential for DNA polymerase activity. The overall folding of the subdomains is similar in p66 RT and p51 RT but the spatial arrangements of the subdomains are dramatically different. Homotetramer; may further associate as a homohexadecamer. Part of the pre-integration complex (PIC) which is composed of viral genome, matrix protein, Vpr and integrase. Interacts with human SMARCB1/INI1 and human PSIP1/LEDGF isoform 1. Interacts with human KPNA3; this interaction might play a role in nuclear import of the pre-integration complex. Interacts with human NUP153; this interaction might play a role in nuclear import of the pre-integration complex. The cofactor is Mg(2+). Specific enzymatic cleavages by the viral protease yield mature proteins. The protease is released by autocatalytic cleavage. The polyprotein is cleaved during and after budding, this process is termed maturation. Proteolytic cleavage of p66 RT removes the RNase H domain to yield the p51 RT subunit. Nucleocapsid protein p7 might be further cleaved after virus entry. In terms of processing, tyrosine phosphorylated presumably in the virion by a host kinase. Phosphorylation is apparently not a major regulator of membrane association. Post-translationally, phosphorylated possibly by host MAPK1; this phosphorylation is necessary for Pin1-mediated virion uncoating. Methylated by host PRMT6, impairing its function by reducing RNA annealing and the initiation of reverse transcription.

It localises to the host cell membrane. The protein localises to the host endosome. Its subcellular location is the host multivesicular body. It is found in the virion membrane. The protein resides in the host nucleus. It localises to the host cytoplasm. The protein localises to the virion. The catalysed reaction is Specific for a P1 residue that is hydrophobic, and P1' variable, but often Pro.. It catalyses the reaction Endohydrolysis of RNA in RNA/DNA hybrids. Three different cleavage modes: 1. sequence-specific internal cleavage of RNA. Human immunodeficiency virus type 1 and Moloney murine leukemia virus enzymes prefer to cleave the RNA strand one nucleotide away from the RNA-DNA junction. 2. RNA 5'-end directed cleavage 13-19 nucleotides from the RNA end. 3. DNA 3'-end directed cleavage 15-20 nucleotides away from the primer terminus.. The enzyme catalyses 3'-end directed exonucleolytic cleavage of viral RNA-DNA hybrid.. It carries out the reaction DNA(n) + a 2'-deoxyribonucleoside 5'-triphosphate = DNA(n+1) + diphosphate. With respect to regulation, protease: The viral protease is inhibited by many synthetic protease inhibitors (PIs), such as amprenavir, atazanavir, indinavir, loprinavir, nelfinavir, ritonavir and saquinavir. Use of protease inhibitors in tritherapy regimens permit more ambitious therapeutic strategies. Reverse transcriptase/ribonuclease H: RT can be inhibited either by nucleoside RT inhibitors (NRTIs) or by non nucleoside RT inhibitors (NNRTIs). NRTIs act as chain terminators, whereas NNRTIs inhibit DNA polymerization by binding a small hydrophobic pocket near the RT active site and inducing an allosteric change in this region. Classical NRTIs are abacavir, adefovir (PMEA), didanosine (ddI), lamivudine (3TC), stavudine (d4T), tenofovir (PMPA), zalcitabine (ddC), and zidovudine (AZT). Classical NNRTIs are atevirdine (BHAP U-87201E), delavirdine, efavirenz (DMP-266), emivirine (I-EBU), and nevirapine (BI-RG-587). The tritherapies used as a basic effective treatment of AIDS associate two NRTIs and one NNRTI. Mediates, with Gag polyprotein, the essential events in virion assembly, including binding the plasma membrane, making the protein-protein interactions necessary to create spherical particles, recruiting the viral Env proteins, and packaging the genomic RNA via direct interactions with the RNA packaging sequence (Psi). Gag-Pol polyprotein may regulate its own translation, by the binding genomic RNA in the 5'-UTR. At low concentration, the polyprotein would promote translation, whereas at high concentration, the polyprotein would encapsidate genomic RNA and then shut off translation. Functionally, targets the polyprotein to the plasma membrane via a multipartite membrane-binding signal, that includes its myristoylated N-terminus. Matrix protein is part of the pre-integration complex. Implicated in the release from host cell mediated by Vpu. Binds to RNA. Its function is as follows. Forms the conical core that encapsulates the genomic RNA-nucleocapsid complex in the virion. Most core are conical, with only 7% tubular. The core is constituted by capsid protein hexamer subunits. The core is disassembled soon after virion entry. Host restriction factors such as TRIM5-alpha or TRIMCyp bind retroviral capsids and cause premature capsid disassembly, leading to blocks in reverse transcription. Capsid restriction by TRIM5 is one of the factors which restricts HIV-1 to the human species. Host PIN1 apparently facilitates the virion uncoating. On the other hand, interactions with PDZD8 or CYPA stabilize the capsid. In terms of biological role, encapsulates and protects viral dimeric unspliced genomic RNA (gRNA). Binds these RNAs through its zinc fingers. Acts as a nucleic acid chaperone which is involved in rearangement of nucleic acid secondary structure during gRNA retrotranscription. Also facilitates template switch leading to recombination. As part of the polyprotein, participates in gRNA dimerization, packaging, tRNA incorporation and virion assembly. Aspartyl protease that mediates proteolytic cleavages of Gag and Gag-Pol polyproteins during or shortly after the release of the virion from the plasma membrane. Cleavages take place as an ordered, step-wise cascade to yield mature proteins. This process is called maturation. Displays maximal activity during the budding process just prior to particle release from the cell. Also cleaves Nef and Vif, probably concomitantly with viral structural proteins on maturation of virus particles. Hydrolyzes host EIF4GI and PABP1 in order to shut off the capped cellular mRNA translation. The resulting inhibition of cellular protein synthesis serves to ensure maximal viral gene expression and to evade host immune response. Also mediates cleavage of host YTHDF3. Mediates cleavage of host CARD8, thereby activating the CARD8 inflammasome, leading to the clearance of latent HIV-1 in patient CD4(+) T-cells after viral reactivation; in contrast, HIV-1 can evade CARD8-sensing when its protease remains inactive in infected cells prior to viral budding. Functionally, multifunctional enzyme that converts the viral RNA genome into dsDNA in the cytoplasm, shortly after virus entry into the cell. This enzyme displays a DNA polymerase activity that can copy either DNA or RNA templates, and a ribonuclease H (RNase H) activity that cleaves the RNA strand of RNA-DNA heteroduplexes in a partially processive 3' to 5' endonucleasic mode. Conversion of viral genomic RNA into dsDNA requires many steps. A tRNA(3)-Lys binds to the primer-binding site (PBS) situated at the 5'-end of the viral RNA. RT uses the 3' end of the tRNA primer to perform a short round of RNA-dependent minus-strand DNA synthesis. The reading proceeds through the U5 region and ends after the repeated (R) region which is present at both ends of viral RNA. The portion of the RNA-DNA heteroduplex is digested by the RNase H, resulting in a ssDNA product attached to the tRNA primer. This ssDNA/tRNA hybridizes with the identical R region situated at the 3' end of viral RNA. This template exchange, known as minus-strand DNA strong stop transfer, can be either intra- or intermolecular. RT uses the 3' end of this newly synthesized short ssDNA to perform the RNA-dependent minus-strand DNA synthesis of the whole template. RNase H digests the RNA template except for two polypurine tracts (PPTs) situated at the 5'-end and near the center of the genome. It is not clear if both polymerase and RNase H activities are simultaneous. RNase H probably can proceed both in a polymerase-dependent (RNA cut into small fragments by the same RT performing DNA synthesis) and a polymerase-independent mode (cleavage of remaining RNA fragments by free RTs). Secondly, RT performs DNA-directed plus-strand DNA synthesis using the PPTs that have not been removed by RNase H as primers. PPTs and tRNA primers are then removed by RNase H. The 3' and 5' ssDNA PBS regions hybridize to form a circular dsDNA intermediate. Strand displacement synthesis by RT to the PBS and PPT ends produces a blunt ended, linear dsDNA copy of the viral genome that includes long terminal repeats (LTRs) at both ends. Its function is as follows. Catalyzes viral DNA integration into the host chromosome, by performing a series of DNA cutting and joining reactions. This enzyme activity takes place after virion entry into a cell and reverse transcription of the RNA genome in dsDNA. The first step in the integration process is 3' processing. This step requires a complex comprising the viral genome, matrix protein, Vpr and integrase. This complex is called the pre-integration complex (PIC). The integrase protein removes 2 nucleotides from each 3' end of the viral DNA, leaving recessed CA OH's at the 3' ends. In the second step, the PIC enters cell nucleus. This process is mediated through integrase and Vpr proteins, and allows the virus to infect a non dividing cell. This ability to enter the nucleus is specific of lentiviruses, other retroviruses cannot and rely on cell division to access cell chromosomes. In the third step, termed strand transfer, the integrase protein joins the previously processed 3' ends to the 5' ends of strands of target cellular DNA at the site of integration. The 5'-ends are produced by integrase-catalyzed staggered cuts, 5 bp apart. A Y-shaped, gapped, recombination intermediate results, with the 5'-ends of the viral DNA strands and the 3' ends of target DNA strands remaining unjoined, flanking a gap of 5 bp. The last step is viral DNA integration into host chromosome. This involves host DNA repair synthesis in which the 5 bp gaps between the unjoined strands are filled in and then ligated. Since this process occurs at both cuts flanking the HIV genome, a 5 bp duplication of host DNA is produced at the ends of HIV-1 integration. Alternatively, Integrase may catalyze the excision of viral DNA just after strand transfer, this is termed disintegration. The polypeptide is Gag-Pol polyprotein (gag-pol) (Homo sapiens (Human)).